The sequence spans 599 residues: MSLFHLYTRVLQLLGKEARLGWILAVANLLLATAQFAEPILFGRIVDVMSGNLATGALVPETRSPWPLLGAWVGFGLFTIMCSALVALQADRLAHRRRQAVLTSYFEHILQLPISFHTGTHSGRLMKVMLQGTDALWRMWLGFFREHFAAILSLVVLLPLSLYINWRLAILLFVLCIVFTVLTTLVVHKTYGMQGEVEAQYSDLSARASDALGNVALVQSFVRVDAEVQGLRNVSGRLLEAQMPVLSWWALVTVITRASTTITVLSIFALGIYLNQQGLTSVGEIVMFVSFATLLIQRLEQVVNFINNVLMEAPRLREFIAVLDTVPAVRDRADAIDCGRLSGLVEFQNVSFSYDGKRPAIEDLSFTALPGDTIALVGATGAGKSTAIALLHRAFDPQSGVIKVDGMDIRGITLASLRRNIGVVFQEALLFDRSIADNLRVGKPDATPEELRLAAERAQALEFIERSDHKFDTNAGERGRMLSGGERQRLSIARALLKDPPILILDEATSALDAVTEAKLNLALDEVMKGRTTFVIAHRLSTIRDATRILVFDNGKVIESGTFDELVARGGAFAQLARAQFMVQESARSAMSSAADAQL.

Residues 21-311 (GWILAVANLL…VVNFINNVLM (291 aa)) enclose the ABC transmembrane type-1 domain. 6 helical membrane passes run 22 to 42 (WILAVANLLLATAQFAEPILF), 68 to 88 (LLGAWVGFGLFTIMCSALVAL), 146 to 166 (EHFAAILSLVVLLPLSLYINW), 168 to 188 (LAILLFVLCIVFTVLTTLVVH), 254 to 274 (VITRASTTITVLSIFALGIYL), and 276 to 296 (QQGLTSVGEIVMFVSFATLLI). Positions 345 to 579 (VEFQNVSFSY…GGAFAQLARA (235 aa)) constitute an ABC transporter domain. ATP is bound at residue 378–385 (GATGAGKS).

Belongs to the ABC transporter superfamily. Beta-(1--&gt;2)glucan exporter (TC 3.A.1.108.1) family. Homodimer.

The protein resides in the cell inner membrane. The catalysed reaction is [(1-&gt;2)-beta-D-glucosyl](n)(in) + ATP + H2O = [(1-&gt;2)-beta-D-glucosyl](n)(out) + ADP + phosphate + H(+). In terms of biological role, involved in beta-(1--&gt;2)glucan export. Transmembrane domains (TMD) form a pore in the inner membrane and the ATP-binding domain (NBD) is responsible for energy generation. The chain is Beta-(1--&gt;2)glucan export ATP-binding/permease protein NdvA from Rhodopseudomonas palustris (strain ATCC BAA-98 / CGA009).